The sequence spans 199 residues: MPEQSNDYRVAVFGAGGVGKSSLVLRFVKGTFRESYIPTVEDTYRQVISCDKSICTLQITDTTGSHQFPAMQRLSISKGHAFILVYSITSRQSLEELKPIYEQICEIKGDMESIPIMLVGNKCDESPSREVQSSEAEALARTWKCAFMETSAKLNHNVKELFQELLNLEKRRTVSLQIDGKKSKQQKRKEKLKGKCVIM.

GTP is bound by residues 14–21 (GAGGVGKS), 33–39 (RESYIPT), 61–65 (DTTGS), and 121–124 (NKCD). S35 carries the post-translational modification Phosphoserine. The Effector region signature appears at 36-44 (YIPTVEDTY). S126 is subject to Phosphoserine. 152–153 (AK) contributes to the GTP binding site. Residue C196 is modified to Cysteine methyl ester. C196 carries the S-geranylgeranyl cysteine lipid modification. Residues 197-199 (VIM) constitute a propeptide, removed in mature form.

It belongs to the small GTPase superfamily. Di-Ras family. Post-translationally, ubiquitinated by the ECS(ASB11) complex via 'Lys-11'-linked ubiquitin chains, leading to its degradation by the proteasome.

The protein localises to the cell membrane. It carries out the reaction GTP + H2O = GDP + phosphate + H(+). Its function is as follows. Displays low GTPase activity and exists predominantly in the GTP-bound form. This Macaca fascicularis (Crab-eating macaque) protein is GTP-binding protein Di-Ras2 (DIRAS2).